Here is a 203-residue protein sequence, read N- to C-terminus: Large ribosomal subunit protein bL25 (203 aa).

It belongs to the bacterial ribosomal protein bL25 family. CTC subfamily. In terms of assembly, part of the 50S ribosomal subunit; part of the 5S rRNA/L5/L18/L25 subcomplex. Contacts the 5S rRNA. Binds to the 5S rRNA independently of L5 and L18.

In terms of biological role, this is one of the proteins that binds to the 5S RNA in the ribosome where it forms part of the central protuberance. This Rickettsia typhi (strain ATCC VR-144 / Wilmington) protein is Large ribosomal subunit protein bL25.